We begin with the raw amino-acid sequence, 159 residues long: MEIDVLVEDDGWSALPDAAEIAIAAARAALASLGDEVPEGAEMSITLTDDARIRVLNREWRDKDKPTNVLSFPAAELPEGVVPQPLGDVIVARETVFSEALAEDKTPAHHLAHLVVHGTLHLMGFDHEDDDEAEEMEAAERQILAGLGIDDPYALPAEG.

Positions 117, 121, and 127 each coordinate Zn(2+).

This sequence belongs to the endoribonuclease YbeY family. Zn(2+) is required as a cofactor.

Its subcellular location is the cytoplasm. In terms of biological role, single strand-specific metallo-endoribonuclease involved in late-stage 70S ribosome quality control and in maturation of the 3' terminus of the 16S rRNA. The sequence is that of Endoribonuclease YbeY from Azorhizobium caulinodans (strain ATCC 43989 / DSM 5975 / JCM 20966 / LMG 6465 / NBRC 14845 / NCIMB 13405 / ORS 571).